The chain runs to 222 residues: Deoxyribose-phosphate aldolase (222 aa).

The active-site Proton donor/acceptor is the D94. The Schiff-base intermediate with acetaldehyde role is filled by K156. The active-site Proton donor/acceptor is the K185.

Belongs to the DeoC/FbaB aldolase family. DeoC type 1 subfamily.

The protein localises to the cytoplasm. The catalysed reaction is 2-deoxy-D-ribose 5-phosphate = D-glyceraldehyde 3-phosphate + acetaldehyde. It participates in carbohydrate degradation; 2-deoxy-D-ribose 1-phosphate degradation; D-glyceraldehyde 3-phosphate and acetaldehyde from 2-deoxy-alpha-D-ribose 1-phosphate: step 2/2. Catalyzes a reversible aldol reaction between acetaldehyde and D-glyceraldehyde 3-phosphate to generate 2-deoxy-D-ribose 5-phosphate. The protein is Deoxyribose-phosphate aldolase of Malacoplasma penetrans (strain HF-2) (Mycoplasma penetrans).